Here is a 155-residue protein sequence, read N- to C-terminus: Ribosomal RNA large subunit methyltransferase H (155 aa).

S-adenosyl-L-methionine-binding positions include L72, G103, and 122–127; that span reads LSPLTL.

The protein belongs to the RNA methyltransferase RlmH family. Homodimer.

It is found in the cytoplasm. It carries out the reaction pseudouridine(1915) in 23S rRNA + S-adenosyl-L-methionine = N(3)-methylpseudouridine(1915) in 23S rRNA + S-adenosyl-L-homocysteine + H(+). In terms of biological role, specifically methylates the pseudouridine at position 1915 (m3Psi1915) in 23S rRNA. The chain is Ribosomal RNA large subunit methyltransferase H from Aeromonas hydrophila subsp. hydrophila (strain ATCC 7966 / DSM 30187 / BCRC 13018 / CCUG 14551 / JCM 1027 / KCTC 2358 / NCIMB 9240 / NCTC 8049).